A 388-amino-acid chain; its full sequence is Envelope protein F13 homolog (388 aa).

Residue Gly2 is the site of N-myristoyl glycine; by host attachment. A PLD phosphodiesterase domain is found at 310–337; sequence GDAINNTKLLVVDDEYVHVSNADIDGTH.

It localises to the virion membrane. The protein localises to the host endoplasmic reticulum membrane. Functionally, envelope protein associated with the inner side of the enveloped virion (EV) membrane. The protein is Envelope protein F13 homolog (P43K) of Molluscum contagiosum virus subtype 2 (MOCV).